A 443-amino-acid polypeptide reads, in one-letter code: Cyclin-A2-1 (443 aa).

The span at 1 to 10 (MHRASSKHTN) shows a compositional bias: basic residues. The disordered stretch occupies residues 1-61 (MHRASSKHTN…KRVARPSNKR (61 aa)). Over residues 11–25 (AKKEAISTSKIRDNN) the composition is skewed to basic and acidic residues.

The protein belongs to the cyclin family. Cyclin AB subfamily. Expressed in tissues with active cell division: apical root and shoot meristems, lateral root and leaf primordia, floral meristems and developing pollen.

May negatively regulate endocycles and act as a regulator of ploidy levels in endoreduplication. The polypeptide is Cyclin-A2-1 (CYCA2-1) (Arabidopsis thaliana (Mouse-ear cress)).